The chain runs to 1083 residues: Neisserial autotransporter lipoprotein NalP (1083 aa).

The first 27 residues, 1 to 27 (MRTTPTFPTKTFKPTAMALAVATTLSA), serve as a signal peptide directing secretion. Cysteine 28 carries N-palmitoyl cysteine lipidation. Cysteine 28 carries the S-diacylglycerol cysteine lipid modification. Residues 111 to 483 (NDAYKNLINL…WGLLDAGKAM (373 aa)) form the Peptidase S8 domain. Active-site charge relay system residues include aspartate 139, histidine 211, and serine 427. In terms of domain architecture, Autotransporter spans 809 to 1083 (DGLDHNGTGL…SGRVGVGYRF (275 aa)). Beta stranded transmembrane passes span 819 to 828 (RVIAQTQQDG), 844 to 852 (TQTVGIAAK), 858 to 866 (TAAATLGMG), 883 to 891 (SLFAGIRHD), 897 to 906 (YLKGLFSYGR), 931 to 941 (QLGALGGVNVP), 948 to 958 (LTVEGGLRYDL), 984 to 994 (VGLAGLKLSQP), 1000 to 1010 (VLFATAGVERD), 1041 to 1052 (RLVAGLGADVEF), 1057 to 1066 (NGLARYSYAG), and 1074 to 1083 (SGRVGVGYRF).

It belongs to the peptidase S8 family. Post-translationally, a fusion protein of the first 44 residues with beta-lactamase is lipidated in E.coli, strongly suggesting this is a lipoprotein in situ. The lipidated form is briefly retained on the cell surface which allows it to process its endogenous substrates on the cell surface before the passenger domain is released into the medium.

It localises to the cell outer membrane. It is found in the cell surface. Its subcellular location is the secreted. Its function is as follows. Major human immunogenic protein. Autotransporter with a secreted protease domain involved in processing other autotransporter proteins including App and IgA. Probably autoprocesses to release the about 70 kDa passenger domain. Processes the lactoferrin receptor lipoprotein subunit (LbpB) extracellularly, releasing it from the cell surface. LbpB release protects bacteria against complement-mediated killing by anti-LbpB antibodies. Processes NHBA. Lipidation slows its auto-processing, probably allowing it to act on endogenous substrates on the cell surface before the passenger domain is released into the medium. The C-terminal beta-barrel domain inserts into the outer membrane where it probably exports the N-terminal passenger domain. Both the cell surface protein (Neisserial autotransporter lipoprotein NalP) and the passenger domain cleave human (host) complement factor C3, generating a shorter alpha chain and a longer beta chain than normal. Functionally, plays a role in extracellular-DNA (eDNA) mediated biofilm formation. In some strains (including cc32 strain H44/76 but not cc11 strain B16B6) eDNA stimulates biofilm formation. When NalP is not expressed (and no longer processes NHBA or IgA) biofilm formation increases. This is probably because the number of positively charged, DNA-binding peptides on the cell surface rises, resulting in increased biofilm formation. In terms of biological role, cleaves human (host) complement factor C3, generating a shorter alpha chain and a longer beta chain than normal. Does not act on mouse or rabbit C3. Cleavage causes C3b degradation by human CFI and CFH, decreases deposition of C3b on the bacteria surface and probably facilitates complement escape. The chain is Neisserial autotransporter lipoprotein NalP from Neisseria meningitidis serogroup B / serotype 15 (strain H44/76).